Reading from the N-terminus, the 976-residue chain is R3H domain-containing protein 2 (976 aa).

2 disordered regions span residues 32–71 (ISKTPSKEEIEKECEDTSLRQETQRRTSNHGHARKRAKSN) and 105–147 (ISCP…QEYT). Positions 36–56 (PSKEEIEKECEDTSLRQETQR) are enriched in basic and acidic residues. Ser-37 is subject to Phosphoserine. The segment covering 58–71 (TSNHGHARKRAKSN) has biased composition (basic residues). Residues 109–143 (SDKEEEKSTKDVSEKEDKDKNKEKIPRKMLSRDSS) are compositionally biased toward basic and acidic residues. Ser-143 is modified (phosphoserine). The 64-residue stretch at 169–232 (RMMLLKLEQE…AVIINKTSNT (64 aa)) folds into the R3H domain. Residues 233–310 (RIPEQRFSEH…NREGLSRTSS (78 aa)) enclose the SUZ domain. Residues 257 to 269 (LKRDDASMDRDDN) are compositionally biased toward basic and acidic residues. Disordered stretches follow at residues 257–376 (LKRD…ISRP), 401–457 (CTAQ…EAAD), 480–560 (ASTG…PGLQ), 661–725 (GTSP…PSMV), and 738–780 (RGQK…SLSS). Residues 306 to 317 (SRTSSSRQSSTD) are compositionally biased toward low complexity. Phosphoserine is present on residues Ser-330, Ser-333, and Ser-349. Residues 401–415 (CTAQQQQQQQQQQLP) show a composition bias toward low complexity. Composition is skewed to polar residues over residues 441-453 (PFGQMSLSRQGST) and 480-504 (ASTGQPLPTSNYSTSSHAPPTQQVL). Residues 543-560 (SPQRGQQLPQPSQQPGLQ) are compositionally biased toward low complexity. Over residues 682–691 (SPSPCSPPQM) the composition is skewed to pro residues. Over residues 692–714 (PQQYSGVSPSGPGVVVMQLNVPN) the composition is skewed to low complexity. Positions 748–758 (PDSSPQANTQM) are enriched in polar residues. Low complexity predominate over residues 759–777 (SSSPVTSPTQSPAPSPVTS). Ser-853 and Ser-855 each carry phosphoserine. Thr-856 and Thr-860 each carry phosphothreonine.

It is found in the nucleus. In Homo sapiens (Human), this protein is R3H domain-containing protein 2 (R3HDM2).